The chain runs to 234 residues: MGKPGKKFLESKKKVNRDLKYGVLEALQTAIESSYAKFDETVDVAVRLGVDPRHADQMVRGTCVLPHGTGKDVRVLVFAKGEKEAEAKEAGADFVGNDDLVEKIQGGWLDFDKAIATPDMMGTVGKMGRILGPRGLMPNAKTGTVTFDVAKAVQELKAGKIDFRVERAGILHAPMGKVSFGAEKLLDNISAFFETVQRLKPSAAKGTYMKSIAVSTTMGPGVKIDPTLVKDIVK.

It belongs to the universal ribosomal protein uL1 family. In terms of assembly, part of the 50S ribosomal subunit.

Its function is as follows. Binds directly to 23S rRNA. The L1 stalk is quite mobile in the ribosome, and is involved in E site tRNA release. Protein L1 is also a translational repressor protein, it controls the translation of the L11 operon by binding to its mRNA. This Desulfatibacillum aliphaticivorans protein is Large ribosomal subunit protein uL1.